A 289-amino-acid polypeptide reads, in one-letter code: Glucosamine-6-phosphate deaminase 1 (289 aa).

Lys-64 is subject to N6-acetyllysine. Catalysis depends on Asp-72, which acts as the Proton acceptor; for enolization step. The active-site For ring-opening step is the Asp-141. The active-site Proton acceptor; for ring-opening step is His-143. Glu-148 functions as the For ring-opening step in the catalytic mechanism. Thr-161 carries the post-translational modification Phosphothreonine.

This sequence belongs to the glucosamine/galactosamine-6-phosphate isomerase family. In terms of assembly, homohexamer.

The protein resides in the cytoplasm. It carries out the reaction alpha-D-glucosamine 6-phosphate + H2O = beta-D-fructose 6-phosphate + NH4(+). The protein operates within nucleotide-sugar biosynthesis; UDP-N-acetyl-alpha-D-glucosamine biosynthesis; alpha-D-glucosamine 6-phosphate from D-fructose 6-phosphate: step 1/1. Its activity is regulated as follows. Allosterically activated by N-acetylglucosamine-6-phosphate (GlcNAc6P). In terms of biological role, catalyzes the reversible conversion of alpha-D-glucosamine 6-phosphate (GlcN-6P) into beta-D-fructose 6-phosphate (Fru-6P) and ammonium ion, a regulatory reaction step in de novo uridine diphosphate-N-acetyl-alpha-D-glucosamine (UDP-GlcNAc) biosynthesis via hexosamine pathway. Deamination is coupled to aldo-keto isomerization mediating the metabolic flux from UDP-GlcNAc toward Fru-6P. At high ammonium level can drive amination and isomerization of Fru-6P toward hexosamines and UDP-GlcNAc synthesis. Has a role in fine tuning the metabolic fluctuations of cytosolic UDP-GlcNAc and their effects on hyaluronan synthesis that occur during tissue remodeling. Seems to trigger calcium oscillations in mammalian eggs. These oscillations serve as the essential trigger for egg activation and early development of the embryo. This Pongo abelii (Sumatran orangutan) protein is Glucosamine-6-phosphate deaminase 1.